Consider the following 499-residue polypeptide: Glycerol kinase (499 aa).

Position 13 (threonine 13) interacts with ADP. Positions 13, 14, and 15 each coordinate ATP. A sn-glycerol 3-phosphate-binding site is contributed by threonine 13. Residue arginine 17 coordinates ADP. Positions 83, 84, 136, and 246 each coordinate sn-glycerol 3-phosphate. Glycerol-binding residues include arginine 83, glutamate 84, tyrosine 136, aspartate 246, and glutamine 247. Threonine 268 and glycine 311 together coordinate ADP. ATP is bound by residues threonine 268, glycine 311, glutamine 315, and glycine 412. The ADP site is built by glycine 412 and asparagine 416.

This sequence belongs to the FGGY kinase family.

The catalysed reaction is glycerol + ATP = sn-glycerol 3-phosphate + ADP + H(+). Its pathway is polyol metabolism; glycerol degradation via glycerol kinase pathway; sn-glycerol 3-phosphate from glycerol: step 1/1. Inhibited by fructose 1,6-bisphosphate (FBP). Key enzyme in the regulation of glycerol uptake and metabolism. Catalyzes the phosphorylation of glycerol to yield sn-glycerol 3-phosphate. The polypeptide is Glycerol kinase (Francisella philomiragia subsp. philomiragia (strain ATCC 25017 / CCUG 19701 / FSC 153 / O#319-036)).